The following is a 500-amino-acid chain: FAD-linked oxidoreductase easE (500 aa).

Residues Gln37 to Asp220 form the FAD-binding PCMH-type domain.

Belongs to the oxygen-dependent FAD-linked oxidoreductase family. FAD serves as cofactor.

It functions in the pathway alkaloid biosynthesis; ergot alkaloid biosynthesis. Functionally, FAD-linked oxidoreductase; part of the gene cluster that mediates the biosynthesis of fungal ergot alkaloid. DmaW catalyzes the first step of ergot alkaloid biosynthesis by condensing dimethylallyl diphosphate (DMAP) and tryptophan to form 4-dimethylallyl-L-tryptophan. The second step is catalyzed by the methyltransferase easF that methylates 4-dimethylallyl-L-tryptophan in the presence of S-adenosyl-L-methionine, resulting in the formation of 4-dimethylallyl-L-abrine. The catalase easC and the FAD-dependent oxidoreductase easE then transform 4-dimethylallyl-L-abrine to chanoclavine-I which is further oxidized by easD in the presence of NAD(+), resulting in the formation of chanoclavine-I aldehyde. Chanoclavine-I aldehyde is the precursor of ergoamides and ergopeptines in Clavicipitaceae, and clavine-type alcaloids such as fumiclavine in Trichocomaceae. However, the metabolites downstream of chanoclavine-I aldehyde in Arthrodermataceae have not been identified yet. The sequence is that of FAD-linked oxidoreductase easE from Arthroderma benhamiae (strain ATCC MYA-4681 / CBS 112371) (Trichophyton mentagrophytes).